The following is a 417-amino-acid chain: MKYLWLFLIYAIGLFATDKTLDIIKTIQKLPKIEVRYSIDNDANYALKLHEVLANDLKTSQHFDVSQNKEQGAINYAELKDKKVHLVALVSVAVENGNKISRLKLYDVDTGTLKKTFDYPIVSLDLYPFAAHNMAIVVNDYLKAPSIAWMKRLIVFSKYIGPGITNIALADYTMRYQKEIIKNNRLNIFPKWANAEQTEFYYTQYGEKTPMILKYNIQKATHENIASSQGMAVVSSVSSDGSKILMSLAPDGQPDVYLYDTHKKTKTKITRYPGIDVSGVFLEDDKSMAFVSDRSGYPNIYMKKLGLKESAEQLLYEGRSNESIDAYKDSIVYVSRENLNEFGKTVFNLNLIALNSKYIRRLTVNGSNQMPRFSMDGRNIMYIKKTSQEYAMGLILLDYNQSFLFPLKNVKIQAFDW.

The first 16 residues, 1 to 16 (MKYLWLFLIYAIGLFA), serve as a signal peptide directing secretion.

Belongs to the TolB family. As to quaternary structure, the Tol-Pal system is composed of five core proteins: the inner membrane proteins TolA, TolQ and TolR, the periplasmic protein TolB and the outer membrane protein Pal. They form a network linking the inner and outer membranes and the peptidoglycan layer.

It is found in the periplasm. In terms of biological role, part of the Tol-Pal system, which plays a role in outer membrane invagination during cell division and is important for maintaining outer membrane integrity. The chain is Tol-Pal system protein TolB from Helicobacter pylori (strain J99 / ATCC 700824) (Campylobacter pylori J99).